The primary structure comprises 866 residues: Speckle targeted PIP5K1A-regulated poly(A) polymerase (866 aa).

The segment at 16-46 adopts a Matrin-type zinc-finger fold; that stretch reads FRCCLCDVTTANRPSLDAHLKGRKHRDLVQL. The 73-residue stretch at 56 to 128 folds into the RRM domain; that stretch reads RSVFVSGFPR…HTLRVRPREQ (73 aa). Residues 116 to 147 are disordered; that stretch reads LGGHTLRVRPREQKEFQSPASKSPKGVDSNSH. An ATP-binding site is contributed by serine 205. Mg(2+) is bound by residues aspartate 216 and aspartate 218. UTP-binding residues include aspartate 216 and aspartate 218. Disordered regions lie at residues 223-249 and 267-321; these read LGDM…STLA and LSPT…EGKH. A compositionally biased stretch (polar residues) spans 282–304; that stretch reads TPSSLAPQTPDSALGSDTVTSPQ. Asparagine 393 is a binding site for ATP. UTP contacts are provided by asparagine 393, arginine 415, tyrosine 433, and histidine 550. The PAP-associated domain maps to 492–550; that stretch reads LSSLLAQFFSCVSCWDLSGSLLSLREGQALMVAGGLPSDLWEGLRLGPMNLQDPFDLSH. The KA1; binds the bulging loops of U6 snRNA but is dispensable for terminal uridylyltransferase activity stretch occupies residues 599–866; it reads SSPSSLLSAK…IPQALKNLLK (268 aa). 3 disordered regions span residues 638–687, 728–755, and 773–792; these read QGTK…DHSE, EQNP…PSSV, and RRRF…STGA. The span at 669-687 shows a compositional bias: basic and acidic residues; the sequence is KSCEEGKEEPQGCAGDHSE. Serine 686 and serine 741 each carry phosphoserine.

Belongs to the DNA polymerase type-B-like family. As to quaternary structure, associates with the cleavage and polyadenylation specificity factor (CPSF) complex. Interacts with CPSF1 and CPSF3; the interaction is direct. Interacts with PIP5K1A. Mg(2+) serves as cofactor. Mn(2+) is required as a cofactor. Post-translationally, phosphorylated by CK1 in the proline-rich (Pro-rich) region.

It is found in the nucleus. The protein localises to the nucleolus. The protein resides in the nucleus speckle. The catalysed reaction is RNA(n) + UTP = RNA(n)-3'-uridine ribonucleotide + diphosphate. It catalyses the reaction RNA(n) + ATP = RNA(n)-3'-adenine ribonucleotide + diphosphate. With respect to regulation, adenylyltransferase activity is specifically phosphatidylinositol 4,5-bisphosphate (PtdIns(4,5)P2). Functionally, poly(A) polymerase that creates the 3'-poly(A) tail of specific pre-mRNAs. Localizes to nuclear speckles together with PIP5K1A and mediates polyadenylation of a select set of mRNAs, such as HMOX1. In addition to polyadenylation, it is also required for the 3'-end cleavage of pre-mRNAs: binds to the 3'UTR of targeted pre-mRNAs and promotes the recruitment and assembly of the CPSF complex on the 3'UTR of pre-mRNAs. In addition to adenylyltransferase activity, also has uridylyltransferase activity. However, the ATP ratio is higher than UTP in cells, suggesting that it functions primarily as a poly(A) polymerase. Acts as a specific terminal uridylyltransferase for U6 snRNA in vitro: responsible for a controlled elongation reaction that results in the restoration of the four 3'-terminal UMP-residues found in newly transcribed U6 snRNA. Not involved in replication-dependent histone mRNA degradation. The chain is Speckle targeted PIP5K1A-regulated poly(A) polymerase (Tut1) from Rattus norvegicus (Rat).